The following is a 339-amino-acid chain: Ketol-acid reductoisomerase (NADP(+)) (339 aa).

In terms of domain architecture, KARI N-terminal Rossmann spans 1–182 (MRVYYDCDVN…GGGRSGIMKT (182 aa)). Residues 24–27 (YGAQ), serine 51, threonine 53, and 83–86 (DELQ) each bind NADP(+). The active site involves histidine 108. Glycine 134 contacts NADP(+). The KARI C-terminal knotted domain maps to 183 to 328 (TFREECETDL…DKIRSMMALT (146 aa)). Aspartate 191, glutamate 195, glutamate 227, and glutamate 231 together coordinate Mg(2+). Serine 252 contributes to the substrate binding site.

It belongs to the ketol-acid reductoisomerase family. Mg(2+) serves as cofactor.

It catalyses the reaction (2R)-2,3-dihydroxy-3-methylbutanoate + NADP(+) = (2S)-2-acetolactate + NADPH + H(+). The catalysed reaction is (2R,3R)-2,3-dihydroxy-3-methylpentanoate + NADP(+) = (S)-2-ethyl-2-hydroxy-3-oxobutanoate + NADPH + H(+). It functions in the pathway amino-acid biosynthesis; L-isoleucine biosynthesis; L-isoleucine from 2-oxobutanoate: step 2/4. It participates in amino-acid biosynthesis; L-valine biosynthesis; L-valine from pyruvate: step 2/4. In terms of biological role, involved in the biosynthesis of branched-chain amino acids (BCAA). Catalyzes an alkyl-migration followed by a ketol-acid reduction of (S)-2-acetolactate (S2AL) to yield (R)-2,3-dihydroxy-isovalerate. In the isomerase reaction, S2AL is rearranged via a Mg-dependent methyl migration to produce 3-hydroxy-3-methyl-2-ketobutyrate (HMKB). In the reductase reaction, this 2-ketoacid undergoes a metal-dependent reduction by NADPH to yield (R)-2,3-dihydroxy-isovalerate. In Bartonella bacilliformis (strain ATCC 35685 / KC583 / Herrer 020/F12,63), this protein is Ketol-acid reductoisomerase (NADP(+)).